We begin with the raw amino-acid sequence, 444 residues long: Methylenetetrahydrofolate--tRNA-(uracil-5-)-methyltransferase TrmFO (444 aa).

11-16 lines the FAD pocket; the sequence is GGGLAG.

It belongs to the MnmG family. TrmFO subfamily. FAD is required as a cofactor.

It localises to the cytoplasm. It catalyses the reaction uridine(54) in tRNA + (6R)-5,10-methylene-5,6,7,8-tetrahydrofolate + NADH + H(+) = 5-methyluridine(54) in tRNA + (6S)-5,6,7,8-tetrahydrofolate + NAD(+). It carries out the reaction uridine(54) in tRNA + (6R)-5,10-methylene-5,6,7,8-tetrahydrofolate + NADPH + H(+) = 5-methyluridine(54) in tRNA + (6S)-5,6,7,8-tetrahydrofolate + NADP(+). Catalyzes the folate-dependent formation of 5-methyl-uridine at position 54 (M-5-U54) in all tRNAs. This chain is Methylenetetrahydrofolate--tRNA-(uracil-5-)-methyltransferase TrmFO, found in Desulfotalea psychrophila (strain LSv54 / DSM 12343).